Here is a 224-residue protein sequence, read N- to C-terminus: Prolactin-3D1 (224 aa).

A signal peptide spans 1–29 (MQLTLNLSGSAGMQLLLLVSSLLLWENVS). Disulfide bonds link Cys81–Cys199 and Cys216–Cys224. N-linked (GlcNAc...) asparagine glycans are attached at residues Asn109 and Asn158.

It belongs to the somatotropin/prolactin family.

It localises to the secreted. The protein is Prolactin-3D1 (Prl3d1) of Mus musculus (Mouse).